The sequence spans 188 residues: Putative manganese efflux pump MntP (188 aa).

The next 6 membrane-spanning stretches (helical) occupy residues 3–23 (LYAL…VALA), 35–55 (IAAT…AGWV), 70–90 (WAAF…GLSG), 104–126 (WLTV…GLAF), 140–160 (MATT…GVLF), and 167–187 (AGGL…LGLI).

Belongs to the MntP (TC 9.B.29) family.

It localises to the cell inner membrane. In terms of biological role, probably functions as a manganese efflux pump. This is Putative manganese efflux pump MntP from Neisseria meningitidis serogroup C / serotype 2a (strain ATCC 700532 / DSM 15464 / FAM18).